The primary structure comprises 218 residues: Uracil-DNA glycosylase (218 aa).

The active-site Proton acceptor is the Asp59.

It belongs to the uracil-DNA glycosylase (UDG) superfamily. UNG family.

It localises to the cytoplasm. The enzyme catalyses Hydrolyzes single-stranded DNA or mismatched double-stranded DNA and polynucleotides, releasing free uracil.. Functionally, excises uracil residues from the DNA which can arise as a result of misincorporation of dUMP residues by DNA polymerase or due to deamination of cytosine. This Staphylococcus aureus (strain bovine RF122 / ET3-1) protein is Uracil-DNA glycosylase.